We begin with the raw amino-acid sequence, 182 residues long: Transmembrane and coiled-coil domain-containing protein 2 (182 aa).

A helical transmembrane segment spans residues Val-51 to Trp-71. Residues Gly-124–Lys-151 are a coiled coil.

The protein resides in the membrane. The protein is Transmembrane and coiled-coil domain-containing protein 2 (TMCO2) of Homo sapiens (Human).